A 287-amino-acid chain; its full sequence is Nucleotide-binding protein VV0445 (287 aa).

8 to 15 is a binding site for ATP; it reads GHSGAGKS. 56–59 is a binding site for GTP; the sequence is DVRN.

The protein belongs to the RapZ-like family.

In terms of biological role, displays ATPase and GTPase activities. This is Nucleotide-binding protein VV0445 from Vibrio vulnificus (strain YJ016).